The chain runs to 210 residues: WASH complex subunit 3 (210 aa).

Residues 49 to 73 are a coiled coil; that stretch reads EEKLASISLRIQQIETTLSILEAKL. A disordered region spans residues 173-210; the sequence is LDPNLLDTPDAPVPDAVKKNTLDQDDDSDDGSESSFSD. Residues 195-204 are compositionally biased toward acidic residues; that stretch reads DQDDDSDDGS.

It belongs to the CCDC53 family. Component of the WASH complex.

This is WASH complex subunit 3 from Salmo salar (Atlantic salmon).